The following is a 183-amino-acid chain: Small ribosomal subunit protein uS4c (183 aa).

The region spanning 82–143 (MRLDNILFRL…KQRSKALIQN (62 aa)) is the S4 RNA-binding domain.

The protein belongs to the universal ribosomal protein uS4 family. As to quaternary structure, part of the 30S ribosomal subunit. Contacts protein S5. The interaction surface between S4 and S5 is involved in control of translational fidelity.

The protein localises to the plastid. The protein resides in the chloroplast. One of the primary rRNA binding proteins, it binds directly to 16S rRNA where it nucleates assembly of the body of the 30S subunit. Its function is as follows. With S5 and S12 plays an important role in translational accuracy. The sequence is that of Small ribosomal subunit protein uS4c (rps4) from Babiana stricta (Baboon flower).